A 174-amino-acid chain; its full sequence is Large ribosomal subunit protein uL18 (174 aa).

It belongs to the universal ribosomal protein uL18 family. Part of the 50S ribosomal subunit. Contacts the 5S and 23S rRNAs.

Its function is as follows. This is one of the proteins that bind and probably mediate the attachment of the 5S RNA into the large ribosomal subunit, where it forms part of the central protuberance. In Methanosarcina barkeri (strain Fusaro / DSM 804), this protein is Large ribosomal subunit protein uL18.